We begin with the raw amino-acid sequence, 304 residues long: Putative dihydroorotate dehydrogenase A (fumarate) (304 aa).

Residues Ser-22 and 46–47 (KG) contribute to the FMN site. Substrate-binding positions include Lys-46 and 70-74 (NSVGL). Asn-100 and Asn-128 together coordinate FMN. Asn-128 contacts substrate. Cys-131 (nucleophile) is an active-site residue. Residues Lys-166 and Val-192 each contribute to the FMN site. 193–194 (NT) is a binding site for substrate. FMN contacts are provided by residues Gly-218, 244-245 (GG), and 266-267 (GT).

This sequence belongs to the dihydroorotate dehydrogenase family. Type 1 subfamily. In terms of assembly, homodimer. The cofactor is FMN.

It is found in the cytoplasm. The catalysed reaction is (S)-dihydroorotate + fumarate = orotate + succinate. It functions in the pathway pyrimidine metabolism; UMP biosynthesis via de novo pathway. Its function is as follows. Catalyzes the conversion of dihydroorotate to orotate with fumarate as the electron acceptor. The sequence is that of Putative dihydroorotate dehydrogenase A (fumarate) (pyrD) from Solibacter usitatus (strain Ellin6076).